A 113-amino-acid polypeptide reads, in one-letter code: Ribosome-binding factor A (113 aa).

This sequence belongs to the RbfA family. As to quaternary structure, monomer. Binds 30S ribosomal subunits, but not 50S ribosomal subunits or 70S ribosomes.

It localises to the cytoplasm. One of several proteins that assist in the late maturation steps of the functional core of the 30S ribosomal subunit. Associates with free 30S ribosomal subunits (but not with 30S subunits that are part of 70S ribosomes or polysomes). Required for efficient processing of 16S rRNA. May interact with the 5'-terminal helix region of 16S rRNA. The sequence is that of Ribosome-binding factor A from Mycoplasmopsis agalactiae (strain NCTC 10123 / CIP 59.7 / PG2) (Mycoplasma agalactiae).